The chain runs to 605 residues: F-box/WD repeat-containing protein 1A (605 aa).

The segment at 128–177 is homodimerization domain D; the sequence is ASYEKEKELCVKYFEQWSESDQVEFVEHLISQMCHYQHGHINSYLKPMLQ. The region spanning 190 to 228 is the F-box domain; it reads DHIAENILSYLDAKSLCAAELVCKEWYRVTSDGMLWKKL. The interval 190-228 is required for down-regulation of SNAI1; sequence DHIAENILSYLDAKSLCAAELVCKEWYRVTSDGMLWKKL. 7 WD repeats span residues 301-338, 341-378, 381-418, 424-461, 464-503, 505-541, and 553-590; these read ETSK…CKRI, GHTG…MLNT, HHCE…DITL, GHRA…FVRT, GHKR…RVLE, HEEL…DPRA, and EHSG…AAQA.

Homodimer. Self-associates. Component of the SCF(BTRC) complex formed of CUL1, SKP1, RBX1 and a BTRC dimer. Direct interaction with SKP1 occurs via the F-box domain. Interacts with phosphorylated ubiquitination substrates SMAD3 and SMAD4. Interacts with phosphorylated ubiquitination substrates CTNNB1, NFKBIA, NFKBIB, NFKBIE, NFKB1/nuclear factor NF-kappa-B p105 subunit, ATF4, CDC25A, DLG1, FBXO5 and SNAI1; the interaction requires the phosphorylation of the 2 serine residues in the substrate destruction motif D-S-G-X(2,3,4)-S. Binds UBQLN1. Interacts with CDC34 and UBE2R2. Interacts with FBXW11. Interacts with CUL4A and DDB1. Part of a SCF(BTRC)-like complex lacking CUL1, which is associated with phosphorylated NKBIA and RELA; RELA interacts directly with NFKBIA. Interacts with the phosphorylated form of GLI3. Interacts with CLU. Interacts with PER1 (phosphorylated), PER2 (phosphorylated) and PER3. Interacts with phosphorylated ubiquitination substrate CEP68. Interacts with ZC3H12A; this interaction occurs when ZC3H12A is phosphorylated in a IKBKB/IKKB-dependent manner. Interacts with HSF1; this interaction occurs during mitosis and induces HSF1 ubiquitin-dependent degradation, a process inhibited by CDC20. Interacts with NFE2L1. Interacts with INAVA. Interacts with IL10RA; this interaction leads to IL10RA ubiquitination and subsequent degradation. Interacts with REST. Interacts with KLF4; this interaction leads to KLF4 ubiquitination and subsequent degradation. Interacts with UBR2, as part of a SCF(BTRC) complex; the interaction mediates 'Lys-48'-linked ubiquitination of UBR2 and is regulated by DUSP22 in the T-cell receptor signaling pathway. As to quaternary structure, (Microbial infection) Interacts with vaccinia virus A49; this interaction inhibits NF-kappa-B activation. In terms of assembly, (Microbial infection) Interacts with HIV-1 Vpu. In terms of processing, ubiquitinated. Deubiquitinated by OTUD5, promoting its stability. In terms of tissue distribution, expressed in epididymis (at protein level).

It is found in the cytoplasm. The protein resides in the nucleus. It participates in protein modification; protein ubiquitination. Functionally, substrate recognition component of a SCF (SKP1-CUL1-F-box protein) E3 ubiquitin-protein ligase complex which mediates the ubiquitination and subsequent proteasomal degradation of target proteins. Recognizes and binds to phosphorylated target proteins. SCF(BTRC) mediates the ubiquitination of CTNNB1 and participates in Wnt signaling. SCF(BTRC) mediates the ubiquitination of phosphorylated NFKB1, ATF4, CDC25A, DLG1, FBXO5, PER1, SMAD3, SMAD4, SNAI1 and probably NFKB2. SCF(BTRC) mediates the ubiquitination of NFKBIA, NFKBIB and NFKBIE; the degradation frees the associated NFKB1 to translocate into the nucleus and to activate transcription. Ubiquitination of NFKBIA occurs at 'Lys-21' and 'Lys-22'. The SCF(FBXW11) complex also regulates NF-kappa-B by mediating ubiquitination of phosphorylated NFKB1: specifically ubiquitinates the p105 form of NFKB1, leading to its degradation. SCF(BTRC) mediates the ubiquitination of CEP68; this is required for centriole separation during mitosis. SCF(BTRC) mediates the ubiquitination and subsequent degradation of nuclear NFE2L1. Has an essential role in the control of the clock-dependent transcription via degradation of phosphorylated PER1 and PER2. May be involved in ubiquitination and subsequent proteasomal degradation through a DBB1-CUL4 E3 ubiquitin-protein ligase. Required for activation of NFKB-mediated transcription by IL1B, MAP3K14, MAP3K1, IKBKB and TNF. Required for proteolytic processing of GLI3. Mediates ubiquitination of REST, thereby leading to its proteasomal degradation. SCF(BTRC) mediates the ubiquitination and subsequent proteasomal degradation of KLF4; thereby negatively regulating cell pluripotency maintenance and embryogenesis. SCF(BTRC) acts as a regulator of mTORC1 signaling pathway by catalyzing ubiquitination and subsequent proteasomal degradation of phosphorylated DEPTOR, TFE3 and MITF. SCF(BTRC) directs 'Lys-48'-linked ubiquitination of UBR2 in the T-cell receptor signaling pathway. This Homo sapiens (Human) protein is F-box/WD repeat-containing protein 1A (BTRC).